Reading from the N-terminus, the 128-residue chain is Small ribosomal subunit protein eS8 (128 aa).

The protein belongs to the eukaryotic ribosomal protein eS8 family. As to quaternary structure, part of the 30S ribosomal subunit.

This is Small ribosomal subunit protein eS8 from Methanococcus aeolicus (strain ATCC BAA-1280 / DSM 17508 / OCM 812 / Nankai-3).